Consider the following 163-residue polypeptide: Transcriptional repressor NrdR (163 aa).

Residues 3–34 (CVQCGHLEDKVIDSRMSKDGTTIRRRRVCLRC) fold into a zinc finger. The 91-residue stretch at 49 to 139 (LRVVKRDNLR…VYRQFSNVEE (91 aa)) folds into the ATP-cone domain.

Belongs to the NrdR family. It depends on Zn(2+) as a cofactor.

Its function is as follows. Negatively regulates transcription of bacterial ribonucleotide reductase nrd genes and operons by binding to NrdR-boxes. The protein is Transcriptional repressor NrdR of Akkermansia muciniphila (strain ATCC BAA-835 / DSM 22959 / JCM 33894 / BCRC 81048 / CCUG 64013 / CIP 107961 / Muc).